The chain runs to 413 residues: Divalent metal cation transporter MntH (413 aa).

Transmembrane regions (helical) follow at residues 19 to 39 (FALMGPAFIAAIGYIDPGNFA), 49 to 69 (GYQLLWVVVWANVMAMVIQLM), 94 to 114 (VWFYWVQAEIIAMATDLAEFI), 122 to 142 (LVFGVTLLQGAMLTGVATFLI), 155 to 175 (LVIGGLLLFVAAAYVIELFFS), 196 to 216 (AVLLAAGVLGATIMPHVIYLH), 240 to 260 (VAIAMTIAGFVNLAMMATAAA), 287 to 307 (AAALVFGLSLLAAGLSSTVVG), 323 to 343 (IPLLLRRVITMLPSFIVILAG), 349 to 369 (ILVMSQVLLSFGIALALIPLL), and 393 to 413 (LIVVVVIALNGYLLVAMALNL).

Belongs to the NRAMP family.

It is found in the cell inner membrane. Functionally, h(+)-stimulated, divalent metal cation uptake system. This Erwinia tasmaniensis (strain DSM 17950 / CFBP 7177 / CIP 109463 / NCPPB 4357 / Et1/99) protein is Divalent metal cation transporter MntH.